The following is a 130-amino-acid chain: Small ribosomal subunit protein uS8 (130 aa).

It belongs to the universal ribosomal protein uS8 family. Part of the 30S ribosomal subunit.

Functionally, one of the primary rRNA binding proteins, it binds directly to 16S rRNA central domain where it helps coordinate assembly of the platform of the 30S subunit. This Natronomonas pharaonis (strain ATCC 35678 / DSM 2160 / CIP 103997 / JCM 8858 / NBRC 14720 / NCIMB 2260 / Gabara) (Halobacterium pharaonis) protein is Small ribosomal subunit protein uS8.